Here is a 255-residue protein sequence, read N- to C-terminus: Dehydrogenase/reductase SDR family member 11 (255 aa).

The N-terminal stretch at 1 to 25 is a signal peptide; the sequence is MERWRDRLALVTGASGGIGAAVARA. NADP(+) is bound by residues 13–18, 38–39, Glu44, 65–66, and Asn92; these read GASGGI, RT, and DL. The substrate site is built by Ser146 and Tyr161. NADP(+) is bound by residues Tyr161, Lys165, 196 to 199, and Lys203; that span reads VETQ. Tyr161 functions as the Proton acceptor in the catalytic mechanism.

The protein belongs to the short-chain dehydrogenases/reductases (SDR) family.

The protein localises to the secreted. It carries out the reaction a 3beta-hydroxysteroid + NADP(+) = a 3-oxosteroid + NADPH + H(+). The enzyme catalyses 17beta-estradiol + NAD(+) = estrone + NADH + H(+). The catalysed reaction is 17beta-estradiol + NADP(+) = estrone + NADPH + H(+). It participates in steroid biosynthesis; estrogen biosynthesis. Inhibited by flavonoids including apigenin, luteolin, genistein, kaempferol and quercetin and also by carbenoxolone, zearalenone, glycyrrhetinic, curcumin and flufenamic acid. In terms of biological role, catalyzes the conversion of the 17-keto group of estrone, 4- and 5-androstenes and 5-alpha-androstanes into their 17-beta-hydroxyl metabolites and the conversion of the 3-keto group of 3-, 3,17- and 3,20- diketosteroids into their 3-hydroxyl metabolites. Exhibits reductive 3-beta-hydroxysteroid dehydrogenase activity toward 5-beta-androstanes, 5-beta-pregnanes, 4-pregnenes and bile acids. May also reduce endogenous and exogenous alpha-dicarbonyl compounds and xenobiotic alicyclic ketones. In Bos taurus (Bovine), this protein is Dehydrogenase/reductase SDR family member 11 (DHRS11).